The following is a 284-amino-acid chain: Isopentenyl-diphosphate Delta-isomerase II, chloroplastic (284 aa).

The N-terminal 45 residues, 1-45, are a transit peptide targeting the chloroplast; it reads MSASSLFNLPLIRLRSLALSSSFSSFRFAHRPLSSISPRKLPNFR. Alanine 46 is modified (N-acetylalanine). Lysine 88 contacts substrate. 2 residues coordinate Mg(2+): histidine 92 and histidine 104. One can recognise a Nudix hydrolase domain in the interval 102–254; the sequence is LLHRAFSVFL…GLKLSPWFRL (153 aa). Arginine 123 and lysine 127 together coordinate substrate. Cysteine 139 is a catalytic residue. Serine 140 provides a ligand contact to substrate. The Nudix box signature appears at 140-170; the sequence is SHPLYRESELIQDNALGVRNAAQRKLLDELG. Mg(2+)-binding residues include glutamate 199 and glutamate 201. Residue glutamate 201 is part of the active site.

The protein belongs to the IPP isomerase type 1 family. Requires Mg(2+) as cofactor.

The protein localises to the plastid. It is found in the chloroplast. The catalysed reaction is isopentenyl diphosphate = dimethylallyl diphosphate. It functions in the pathway isoprenoid biosynthesis; dimethylallyl diphosphate biosynthesis; dimethylallyl diphosphate from isopentenyl diphosphate: step 1/1. It participates in porphyrin-containing compound metabolism; chlorophyll biosynthesis. Catalyzes the 1,3-allylic rearrangement of the homoallylic substrate isopentenyl (IPP) to its highly electrophilic allylic isomer, dimethylallyl diphosphate (DMAPP). In Arabidopsis thaliana (Mouse-ear cress), this protein is Isopentenyl-diphosphate Delta-isomerase II, chloroplastic (IPP2).